We begin with the raw amino-acid sequence, 283 residues long: Thymidylate synthase (283 aa).

Arginine 22 contacts dUMP. The active-site Nucleophile is cysteine 160. DUMP-binding positions include 180 to 183 (RSCD), asparagine 191, and 221 to 223 (HIY). Aspartate 183 is a (6R)-5,10-methylene-5,6,7,8-tetrahydrofolate binding site. Residue serine 282 coordinates (6R)-5,10-methylene-5,6,7,8-tetrahydrofolate.

The protein belongs to the thymidylate synthase family. Bacterial-type ThyA subfamily. In terms of assembly, homodimer.

It is found in the cytoplasm. The catalysed reaction is dUMP + (6R)-5,10-methylene-5,6,7,8-tetrahydrofolate = 7,8-dihydrofolate + dTMP. It participates in pyrimidine metabolism; dTTP biosynthesis. In terms of biological role, catalyzes the reductive methylation of 2'-deoxyuridine-5'-monophosphate (dUMP) to 2'-deoxythymidine-5'-monophosphate (dTMP) while utilizing 5,10-methylenetetrahydrofolate (mTHF) as the methyl donor and reductant in the reaction, yielding dihydrofolate (DHF) as a by-product. This enzymatic reaction provides an intracellular de novo source of dTMP, an essential precursor for DNA biosynthesis. The sequence is that of Thymidylate synthase from Vibrio vulnificus (strain YJ016).